The sequence spans 555 residues: 2-succinyl-5-enolpyruvyl-6-hydroxy-3-cyclohexene-1-carboxylate synthase (555 aa).

The protein belongs to the TPP enzyme family. MenD subfamily. Homodimer. Requires Mg(2+) as cofactor. Mn(2+) serves as cofactor. It depends on thiamine diphosphate as a cofactor.

It catalyses the reaction isochorismate + 2-oxoglutarate + H(+) = 5-enolpyruvoyl-6-hydroxy-2-succinyl-cyclohex-3-ene-1-carboxylate + CO2. Its pathway is quinol/quinone metabolism; 1,4-dihydroxy-2-naphthoate biosynthesis; 1,4-dihydroxy-2-naphthoate from chorismate: step 2/7. The protein operates within quinol/quinone metabolism; menaquinone biosynthesis. Functionally, catalyzes the thiamine diphosphate-dependent decarboxylation of 2-oxoglutarate and the subsequent addition of the resulting succinic semialdehyde-thiamine pyrophosphate anion to isochorismate to yield 2-succinyl-5-enolpyruvyl-6-hydroxy-3-cyclohexene-1-carboxylate (SEPHCHC). The protein is 2-succinyl-5-enolpyruvyl-6-hydroxy-3-cyclohexene-1-carboxylate synthase of Bacteroides thetaiotaomicron (strain ATCC 29148 / DSM 2079 / JCM 5827 / CCUG 10774 / NCTC 10582 / VPI-5482 / E50).